Reading from the N-terminus, the 241-residue chain is 1-(5-phosphoribosyl)-5-[(5-phosphoribosylamino)methylideneamino] imidazole-4-carboxamide isomerase (241 aa).

Asp8 serves as the catalytic Proton acceptor. Catalysis depends on Asp129, which acts as the Proton donor.

It belongs to the HisA/HisF family.

Its subcellular location is the cytoplasm. The catalysed reaction is 1-(5-phospho-beta-D-ribosyl)-5-[(5-phospho-beta-D-ribosylamino)methylideneamino]imidazole-4-carboxamide = 5-[(5-phospho-1-deoxy-D-ribulos-1-ylimino)methylamino]-1-(5-phospho-beta-D-ribosyl)imidazole-4-carboxamide. Its pathway is amino-acid biosynthesis; L-histidine biosynthesis; L-histidine from 5-phospho-alpha-D-ribose 1-diphosphate: step 4/9. The polypeptide is 1-(5-phosphoribosyl)-5-[(5-phosphoribosylamino)methylideneamino] imidazole-4-carboxamide isomerase (Chloroflexus aggregans (strain MD-66 / DSM 9485)).